Reading from the N-terminus, the 310-residue chain is Elongation factor Ts, mitochondrial (310 aa).

Residues 1 to 42 (MGFQVLRSVIQAPLAKRSFLCKSCPSGLRVLYNNILLSSRSY) constitute a mitochondrion transit peptide.

Belongs to the EF-Ts family.

It is found in the mitochondrion. In terms of biological role, associates with the EF-Tu.GDP complex and induces the exchange of GDP to GTP. It remains bound to the aminoacyl-tRNA.EF-Tu.GTP complex up to the GTP hydrolysis stage on the ribosome. The protein is Elongation factor Ts, mitochondrial (tsf1) of Schizosaccharomyces japonicus (strain yFS275 / FY16936) (Fission yeast).